Reading from the N-terminus, the 346-residue chain is Putative aminopeptidase YhfE (346 aa).

A divalent metal cation-binding residues include histidine 68 and aspartate 185. The Proton acceptor role is filled by glutamate 219. 3 residues coordinate a divalent metal cation: glutamate 220, aspartate 240, and histidine 320.

It belongs to the peptidase M42 family. Requires a divalent metal cation as cofactor.

This chain is Putative aminopeptidase YhfE (yhfE), found in Bacillus subtilis (strain 168).